A 223-amino-acid chain; its full sequence is Putative N-acetylmannosamine-6-phosphate 2-epimerase (223 aa).

This sequence belongs to the NanE family.

It catalyses the reaction an N-acyl-D-glucosamine 6-phosphate = an N-acyl-D-mannosamine 6-phosphate. The protein operates within amino-sugar metabolism; N-acetylneuraminate degradation; D-fructose 6-phosphate from N-acetylneuraminate: step 3/5. Its function is as follows. Converts N-acetylmannosamine-6-phosphate (ManNAc-6-P) to N-acetylglucosamine-6-phosphate (GlcNAc-6-P). The protein is Putative N-acetylmannosamine-6-phosphate 2-epimerase of Staphylococcus haemolyticus (strain JCSC1435).